Consider the following 477-residue polypeptide: Tripartite motif-containing protein 72 (477 aa).

Zn(2+) contacts are provided by Cys14, Cys17, Cys29, His31, Cys34, Cys37, Cys53, Cys56, Cys86, His89, Cys97, Asp100, Cys105, Cys108, His114, and His117. The segment at 14–57 adopts an RING-type zinc-finger fold; it reads CPLCLQLFDAPVTAECGHSFCRACLGRVAGEPAADGTVLCPCCQ. Residues 81–122 form a B box-type zinc finger; the sequence is VPQGHCEEHLDPLSIYCEQDRALVCGVCASLGSHRGHRLLPA. Residues 135–232 are a coiled coil; the sequence is QQKLQLQEAC…EKVLEEVADK (98 aa). Cys144 is modified (S-nitrosocysteine). At Ser255 the chain carries Phosphoserine. Residues 271 to 475 enclose the B30.2/SPRY domain; sequence DFKFQVWRKM…PLLLVGPEGA (205 aa).

Belongs to the TRIM/RBCC family. In terms of assembly, homodimer. Homooligomer; disulfide-linked. Oligomerizes on the phospholipid membrane. Interacts with DYSF and CAV3. In terms of processing, disulfide bond formation at Cys-242 occurs in case of membrane damage that cause the entry of the oxidized milieu of the extracellular space, resulting in homooligomerization. Post-translationally, S-nitrosylation at Cys-144 stabilizes TRIM72 and protects against oxidation-induced protein degradation and cell death.

It is found in the cell membrane. The protein localises to the sarcolemma. It localises to the cytoplasmic vesicle membrane. It carries out the reaction S-ubiquitinyl-[E2 ubiquitin-conjugating enzyme]-L-cysteine + [acceptor protein]-L-lysine = [E2 ubiquitin-conjugating enzyme]-L-cysteine + N(6)-ubiquitinyl-[acceptor protein]-L-lysine.. The protein operates within protein modification; protein ubiquitination. With respect to regulation, specifically binds phosphatidylserine. The binding to phospholipids enhances ubiquitination activity. Muscle-specific E3 ubiquitin-protein ligase that plays a central role in cell membrane repair by nucleating the assembly of the repair machinery at injury sites. Its ubiquitination activity is mediated by E2 ubiquitin-conjugating enzymes UBE2D1, UBE2D2 and UBE2D3. Acts as a sensor of oxidation: upon membrane damage, entry of extracellular oxidative environment results in disulfide bond formation and homooligomerization at the injury site. This oligomerization acts as a nucleation site for recruitment of TRIM72-containing vesicles to the injury site, leading to membrane patch formation. Probably acts upstream of the Ca(2+)-dependent membrane resealing process. Required for transport of DYSF to sites of cell injury during repair patch formation. Regulates membrane budding and exocytosis. May be involved in the regulation of the mobility of KCNB1-containing endocytic vesicles. In Homo sapiens (Human), this protein is Tripartite motif-containing protein 72.